Reading from the N-terminus, the 130-residue chain is Prefoldin subunit alpha (130 aa).

It belongs to the prefoldin subunit alpha family. In terms of assembly, heterohexamer of two alpha and four beta subunits.

The protein resides in the cytoplasm. Molecular chaperone capable of stabilizing a range of proteins. Seems to fulfill an ATP-independent, HSP70-like function in archaeal de novo protein folding. The polypeptide is Prefoldin subunit alpha (Thermoplasma volcanium (strain ATCC 51530 / DSM 4299 / JCM 9571 / NBRC 15438 / GSS1)).